The following is a 172-amino-acid chain: Stellate orphon protein at 12D (172 aa).

It belongs to the casein kinase 2 subunit beta family. In terms of assembly, interacts in vitro with the casein kinase 2 alpha subunit (CkII-alpha). The relevance of such interaction is however unclear in vivo. In terms of tissue distribution, probably not expressed in wild-type flies. In males lacking the Y chromosome, it is testis-specific and constitutes the main component of star-shaped crystals.

In terms of biological role, unknown. In males lacking the Y chromosome, its strong overexpression leads to the appearance of proteinaceous star-shaped crystals in the primary spermatocytes causing meiotic drive, possibly by interfering with normal casein kinase 2 activity. The sequence is that of Stellate orphon protein at 12D (Ste12DOR) from Drosophila melanogaster (Fruit fly).